The following is a 524-amino-acid chain: Glycoprotein (524 aa).

Residues 1 to 19 form the signal peptide; that stretch reads MVPQVLLFVPLLVFSMCFG. Residues 20–459 are Virion surface-facing; sequence KFPIYTIPDK…DLGLPSWGKY (440 aa). 6 cysteine pairs are disulfide-bonded: C43–C302, C54–C226, C80–C113, C178–C188, C208–C247, and C242–C271. An N-linked (GlcNAc...) asparagine; by host glycan is attached at N56. N338 carries an N-linked (GlcNAc...) asparagine; by host glycan. Residues C363 and C370 are joined by a disulfide bond. Residues 460 to 480 form a helical membrane-spanning segment; it reads VLVSAGVLVVLMLTIFIMTCC. C480 carries S-palmitoyl cysteine; by host lipidation. The Intravirion segment spans residues 481–524; the sequence is GRVHRPKSTQHGLGGTGRKVSVTSQSGKVISSWESYKSGGETRL.

The protein belongs to the lyssavirus glycoprotein family. Homotrimer. Interacts with matrix protein. Interacts with host TRFC. Interacts with host BST2; this interaction inhibits viral budding by tethering new virions to the cell surface. Interacts with ITGB1. Interacts with host GRM2. Glycosylated and palmitoylated by host. Glycosylation is crucial for glycoprotein export at the cell surface.

The protein localises to the virion membrane. Its function is as follows. Attaches the virus to host cellular receptor, inducing endocytosis of the virion by using different host proteins including TFRC, GRM2 and ITGB1. In the endosome, the acidic pH induces conformational changes in the glycoprotein trimer, which trigger fusion between virus and cell membrane. There is convincing in vitro evidence that the muscular form of the nicotinic acetylcholine receptor (nAChR), the neuronal cell adhesion molecule (NCAM), and the p75 neurotrophin receptor (p75NTR) bind glycoprotein and thereby facilitate rabies virus entry into cells. This chain is Glycoprotein (G), found in Homo sapiens (Human).